A 316-amino-acid polypeptide reads, in one-letter code: Apolipoprotein E (316 aa).

The signal sequence occupies residues 1–18 (MKVLWVAVVVALLAGCQA). The O-linked (GalNAc...) threonine glycan is linked to threonine 32. 8 repeat units span residues 79–100 (ALME…GQLG), 101–122 (PMAQ…ARLG), 123–144 (SDME…AMLG), 145–166 (QSTE…KRLL), 167–188 (RDAD…EGAE), 189–210 (RSLS…SRAA), 211–232 (TLST…QKLH), and 233–254 (GRLE…QQLE). An 8 X 22 AA approximate tandem repeats region spans residues 79-254 (ALMEETMKEV…RLDKIRQQLE (176 aa)). Methionine 142 carries the methionine sulfoxide modification. Serine 146 is subject to Phosphoserine. An LDL and other lipoprotein receptors binding region spans residues 157–167 (HLRKLPKRLLR). A heparin-binding site is contributed by 161-164 (LPKR). A lipid-binding and lipoprotein association region spans residues 209–289 (AATLSTLAGQ…SWFEPLVEDM (81 aa)). Threonine 211 carries O-linked (GalNAc...) threonine glycosylation. 228-235 (RQKLHGRL) provides a ligand contact to heparin. Positions 265–316 (NQMRLQAEAFQARLRSWFEPLVEDMQRQWAGLVEKVQLALRPSPTSPPSENH) are homooligomerization. The specificity for association with VLDL stretch occupies residues 277 to 289 (RLRSWFEPLVEDM). O-linked (GalNAc...) threonine glycosylation is present at threonine 309. Serine 310 is a glycosylation site (O-linked (GalNAc...) serine).

Belongs to the apolipoprotein A1/A4/E family. As to quaternary structure, homotetramer. May interact with ABCA1; functionally associated with ABCA1 in the biogenesis of HDLs. May interact with APP/A4 amyloid-beta peptide; the interaction is extremely stable in vitro but its physiological significance is unclear. May interact with MAPT. May interact with MAP2. In the cerebrospinal fluid, interacts with secreted SORL1. Interacts with PMEL; this allows the loading of PMEL luminal fragment on ILVs to induce fibril nucleation. Post-translationally, APOE exists as multiple glycosylated and sialylated glycoforms within cells and in plasma. The extent of glycosylation and sialylation are tissue and context specific. Glycated in plasma VLDL. In terms of processing, phosphorylated by FAM20C in the extracellular medium.

Its subcellular location is the secreted. The protein resides in the extracellular space. It localises to the extracellular matrix. The protein localises to the extracellular vesicle. It is found in the endosome. Its subcellular location is the multivesicular body. In terms of biological role, APOE is an apolipoprotein, a protein associating with lipid particles, that mainly functions in lipoprotein-mediated lipid transport between organs via the plasma and interstitial fluids. APOE is a core component of plasma lipoproteins and is involved in their production, conversion and clearance. Apolipoproteins are amphipathic molecules that interact both with lipids of the lipoprotein particle core and the aqueous environment of the plasma. As such, APOE associates with chylomicrons, chylomicron remnants, very low density lipoproteins (VLDL) and intermediate density lipoproteins (IDL) but shows a preferential binding to high-density lipoproteins (HDL). It also binds a wide range of cellular receptors including the LDL receptor/LDLR and the very low-density lipoprotein receptor/VLDLR that mediate the cellular uptake of the APOE-containing lipoprotein particles. Finally, APOE also has a heparin-binding activity and binds heparan-sulfate proteoglycans on the surface of cells, a property that supports the capture and the receptor-mediated uptake of APOE-containing lipoproteins by cells. This is Apolipoprotein E (APOE) from Bos taurus (Bovine).